The chain runs to 157 residues: 17.8 kDa class I heat shock protein (157 aa).

In terms of domain architecture, sHSP spans 43 to 157 (ETAAFVNTHI…PEVKAIDISG (115 aa)).

This sequence belongs to the small heat shock protein (HSP20) family. Forms oligomeric structures.

The protein localises to the cytoplasm. In Daucus carota (Wild carrot), this protein is 17.8 kDa class I heat shock protein.